Consider the following 339-residue polypeptide: 5-dehydro-2-deoxygluconokinase (339 aa).

It belongs to the carbohydrate kinase PfkB family.

The catalysed reaction is 5-dehydro-2-deoxy-D-gluconate + ATP = 6-phospho-5-dehydro-2-deoxy-D-gluconate + ADP + H(+). The protein operates within polyol metabolism; myo-inositol degradation into acetyl-CoA; acetyl-CoA from myo-inositol: step 5/7. Catalyzes the phosphorylation of 5-dehydro-2-deoxy-D-gluconate (2-deoxy-5-keto-D-gluconate or DKG) to 6-phospho-5-dehydro-2-deoxy-D-gluconate (DKGP). This is 5-dehydro-2-deoxygluconokinase from Clostridium tetani (strain Massachusetts / E88).